The primary structure comprises 221 residues: Urease accessory protein UreG (221 aa).

19 to 26 (GPVGSGKT) is a binding site for GTP.

Belongs to the SIMIBI class G3E GTPase family. UreG subfamily. In terms of assembly, homodimer. UreD, UreF and UreG form a complex that acts as a GTP-hydrolysis-dependent molecular chaperone, activating the urease apoprotein by helping to assemble the nickel containing metallocenter of UreC. The UreE protein probably delivers the nickel.

The protein resides in the cytoplasm. Functionally, facilitates the functional incorporation of the urease nickel metallocenter. This process requires GTP hydrolysis, probably effectuated by UreG. The protein is Urease accessory protein UreG of Yersinia enterocolitica serotype O:8 / biotype 1B (strain NCTC 13174 / 8081).